We begin with the raw amino-acid sequence, 123 residues long: ATP synthase epsilon chain (123 aa).

It belongs to the ATPase epsilon chain family. In terms of assembly, F-type ATPases have 2 components, CF(1) - the catalytic core - and CF(0) - the membrane proton channel. CF(1) has five subunits: alpha(3), beta(3), gamma(1), delta(1), epsilon(1). CF(0) has three main subunits: a, b and c.

Its subcellular location is the cell inner membrane. In terms of biological role, produces ATP from ADP in the presence of a proton gradient across the membrane. This is ATP synthase epsilon chain from Helicobacter pylori (strain P12).